A 415-amino-acid polypeptide reads, in one-letter code: Multidrug resistance protein MdtA (415 aa).

Positions 1 to 21 (MKGSYKSRWVIVIVVVIAAIA) are cleaved as a signal peptide. A compositionally biased stretch (polar residues) spans 31–46 (DSQSAAPGATKQAQQS). Disordered regions lie at residues 31–56 (DSQS…GMRA) and 392–415 (EAQS…GARS). A compositionally biased stretch (basic and acidic residues) spans 399-415 (PEEKATSREYAKKGARS).

Belongs to the membrane fusion protein (MFP) (TC 8.A.1) family. Part of a tripartite efflux system composed of MdtA, MdtB and MdtC.

It localises to the cell inner membrane. Its function is as follows. The MdtABC tripartite complex confers resistance against novobiocin and deoxycholate. The sequence is that of Multidrug resistance protein MdtA from Escherichia coli O6:K15:H31 (strain 536 / UPEC).